Consider the following 430-residue polypeptide: Sphingosine-1-phosphate phosphatase 1 (430 aa).

A disordered region spans residues 34–100 (GSPKAGEDAE…PRRAGSLRRN (67 aa)). Residue S101 is modified to Phosphoserine. Residue T103 is modified to Phosphothreonine. 4 consecutive transmembrane segments (helical) span residues 121 to 141 (FCFG…PFWI), 152 to 172 (LVII…IIRW), 193 to 213 (MPST…LLTY), and 216 to 236 (WQYP…LVCL). Residues 167 to 175 (KDIIRWPRP) are phosphatase sequence motif I. Residues 194–197 (PSTH) form a phosphatase sequence motif II region. Catalysis depends on H197, which acts as the Proton donor. Residues 237–248 (SRIYMGMHSILD) form a phosphatase sequence motif III region. H244 (nucleophile) is an active-site residue. Transmembrane regions (helical) follow at residues 246 to 266 (ILDV…FYPL), 279 to 299 (YAPL…FTLD), 311 to 331 (ILGS…LGIS), 348 to 368 (VTLF…VLFV), and 409 to 429 (YGTV…FIGI).

The protein belongs to the type 2 lipid phosphate phosphatase family.

The protein localises to the endoplasmic reticulum membrane. It is found in the cell membrane. The enzyme catalyses sphinganine 1-phosphate + H2O = sphinganine + phosphate. It catalyses the reaction sphing-4-enine 1-phosphate + H2O = sphing-4-enine + phosphate. In terms of biological role, specifically dephosphorylates sphingosine 1-phosphate (S1P), dihydro-S1P, and phyto-S1P. Does not act on ceramide 1-phosphate, lysophosphatidic acid or phosphatidic acid. Sphingosine-1-phosphate phosphatase activity is needed for efficient recycling of sphingosine into the sphingolipid synthesis pathway. Regulates the intracellular levels of the bioactive sphingolipid metabolite S1P that regulates diverse biological processes acting both as an extracellular receptor ligand or as an intracellular second messenger. Involved in efficient ceramide synthesis from exogenous sphingoid bases. Converts S1P to sphingosine, which is readily metabolized to ceramide via ceramide synthase. In concert with sphingosine kinase 2 (SphK2), recycles sphingosine into ceramide through a phosphorylation/dephosphorylation cycle. Regulates endoplasmic-to-Golgi trafficking of ceramides, resulting in the regulation of ceramide levels in the endoplasmic reticulum, preferentially long-chain ceramide species, and influences the anterograde membrane transport of both ceramide and proteins from the endoplasmic reticulum to the Golgi apparatus. The modulation of intracellular ceramide levels in turn regulates apoptosis. Via S1P levels, modulates resting tone, intracellular Ca(2+) and myogenic vasoconstriction in resistance arteries. Also involved in unfolded protein response (UPR) and ER stress-induced autophagy via regulation of intracellular S1P levels. Involved in the regulation of epidermal homeostasis and keratinocyte differentiation. The protein is Sphingosine-1-phosphate phosphatase 1 of Rattus norvegicus (Rat).